Reading from the N-terminus, the 360-residue chain is Phospho-N-acetylmuramoyl-pentapeptide-transferase (360 aa).

The next 10 helical transmembrane spans lie at 27 to 47 (IVSLLTALAIALWMGPRMIAF), 71 to 91 (TPTMGGLLILLSITISTLLWV), 94 to 114 (NNPYVWCVLIVLIGYGIVGFV), 132 to 152 (WKYFWQSVLALGVAFAMYSFG), 168 to 188 (VMPQLGVLYILLTYFVIVGTS), 199 to 219 (GLAIMPTVFVAAGFALVAWAT), 236 to 256 (AGELVIVCTAIVGAGLGFLWF), 263 to 283 (VFMGDVGSLALGGALGTIAVL), 288 to 308 (FLLVIMGGVFVVETLSVILQV), and 338 to 358 (VIVRFWIISLMLVLIGLATLK).

Belongs to the glycosyltransferase 4 family. MraY subfamily. Mg(2+) serves as cofactor.

It localises to the cell inner membrane. The catalysed reaction is UDP-N-acetyl-alpha-D-muramoyl-L-alanyl-gamma-D-glutamyl-meso-2,6-diaminopimeloyl-D-alanyl-D-alanine + di-trans,octa-cis-undecaprenyl phosphate = di-trans,octa-cis-undecaprenyl diphospho-N-acetyl-alpha-D-muramoyl-L-alanyl-D-glutamyl-meso-2,6-diaminopimeloyl-D-alanyl-D-alanine + UMP. The protein operates within cell wall biogenesis; peptidoglycan biosynthesis. Functionally, catalyzes the initial step of the lipid cycle reactions in the biosynthesis of the cell wall peptidoglycan: transfers peptidoglycan precursor phospho-MurNAc-pentapeptide from UDP-MurNAc-pentapeptide onto the lipid carrier undecaprenyl phosphate, yielding undecaprenyl-pyrophosphoryl-MurNAc-pentapeptide, known as lipid I. This chain is Phospho-N-acetylmuramoyl-pentapeptide-transferase, found in Photorhabdus laumondii subsp. laumondii (strain DSM 15139 / CIP 105565 / TT01) (Photorhabdus luminescens subsp. laumondii).